Here is a 237-residue protein sequence, read N- to C-terminus: Bax inhibitor 1 (237 aa).

Topologically, residues 1-29 (MNIFDRKINFDALLKFSHITPSTQQHLKK) are cytoplasmic. A Glycyl lysine isopeptide (Lys-Gly) (interchain with G-Cter in ubiquitin) cross-link involves residue K7. Residues 30-50 (VYASFALCMFVAAAGAYVHVV) traverse the membrane as a helical segment. Over 51-52 (TR) the chain is Lumenal. Residues 53–73 (FIQAGLLSALGALALMICLMA) traverse the membrane as a helical segment. Topologically, residues 74–86 (TPHSHETEQKRLG) are cytoplasmic. A helical transmembrane segment spans residues 87-107 (LLAGFAFLTGVGLGPALELCI). At 108 to 112 (AINPS) the chain is on the lumenal side. A helical membrane pass occupies residues 113–133 (ILPTAFMGTAMIFTCFSLSAL). The Cytoplasmic portion of the chain corresponds to 134 to 139 (YARRRS). Residues 140 to 160 (YLFLGGILMSAMSLMFVSSLG) traverse the membrane as a helical segment. Over 161–166 (NLFFGS) the chain is Lumenal. A helical transmembrane segment spans residues 167-187 (IWLFQANLYMGLLVMCGFVLF). Over 188–206 (DTQLIIEKAEHGDKDYIWH) the chain is Cytoplasmic. The segment at residues 207–227 (CIDLFLDFVTLFRKLMLILAF) is an intramembrane region (helical). Topologically, residues 228 to 237 (NEKDKKKEKK) are cytoplasmic.

This sequence belongs to the BI1 family. As to quaternary structure, interacts with BCL2 and BCL2L1. Interacts with ERN1. Ubiquitinated by BFAR, leading to proteasomal degradation. In terms of tissue distribution, highly abundant in adult testis.

The protein resides in the endoplasmic reticulum membrane. Endoplasmic reticulum (ER)-resident protein that confers cellular protection as an anti-apoptotic protein by limiting multiple stress-inducing pathways surrounding the endoplasmic reticulum and mitochondria. Inhibits the activities of the key sensor for the endoplasmic reticulum unfolded protein response IRE1alpha/ERN1 both directly and by blocking BAX/BAK binding. Modulates ER calcium homeostasis by acting as a calcium-leak channel. Negatively regulates autophagy and autophagosome formation, especially during periods of nutrient deprivation, and reduces cell survival during starvation. This is Bax inhibitor 1 (Tmbim6) from Rattus norvegicus (Rat).